We begin with the raw amino-acid sequence, 164 residues long: S-ribosylhomocysteine lyase (164 aa).

Residues His-61, His-65, and Cys-131 each coordinate Fe cation.

This sequence belongs to the LuxS family. In terms of assembly, homodimer. It depends on Fe cation as a cofactor.

It catalyses the reaction S-(5-deoxy-D-ribos-5-yl)-L-homocysteine = (S)-4,5-dihydroxypentane-2,3-dione + L-homocysteine. Functionally, involved in the synthesis of autoinducer 2 (AI-2) which is secreted by bacteria and is used to communicate both the cell density and the metabolic potential of the environment. The regulation of gene expression in response to changes in cell density is called quorum sensing. Catalyzes the transformation of S-ribosylhomocysteine (RHC) to homocysteine (HC) and 4,5-dihydroxy-2,3-pentadione (DPD). The polypeptide is S-ribosylhomocysteine lyase (Bifidobacterium longum (strain NCC 2705)).